A 214-amino-acid chain; its full sequence is MRIVLLGAPGAGKGTQAQFIMEKHGIPQISTGDMLRAAIKAGTELGLNAKAVMDAGQLVSDDIIIGLVKERIAQPDCANGFLLDGFPRTIPQAQAMKDAGVVVDFVLEFDVPDEEIVKRMSGRRVHSGSGRTYHVVFNPPKVEGKDDVTGEDLVIRADDEETTVRKRLDVYHQQTAPLIGFYGKEAEAGNTRYVKIDGTQPVDQVSKQLARILG.

10–15 (GAGKGT) is a binding site for ATP. Residues 30-59 (STGDMLRAAIKAGTELGLNAKAVMDAGQLV) are NMP. AMP contacts are provided by residues threonine 31, arginine 36, 57–59 (QLV), 85–88 (GFPR), and glutamine 92. An LID region spans residues 122–159 (GRRVHSGSGRTYHVVFNPPKVEGKDDVTGEDLVIRADD). ATP is bound by residues arginine 123 and 132–133 (TY). AMP contacts are provided by arginine 156 and arginine 167. ATP is bound at residue glutamine 200.

It belongs to the adenylate kinase family. In terms of assembly, monomer.

The protein localises to the cytoplasm. It catalyses the reaction AMP + ATP = 2 ADP. It participates in purine metabolism; AMP biosynthesis via salvage pathway; AMP from ADP: step 1/1. In terms of biological role, catalyzes the reversible transfer of the terminal phosphate group between ATP and AMP. Plays an important role in cellular energy homeostasis and in adenine nucleotide metabolism. The sequence is that of Adenylate kinase from Aeromonas salmonicida (strain A449).